The following is a 238-amino-acid chain: 7-cyano-7-deazaguanine synthase (238 aa).

Residue 12–22 (FSGGQDSGTCL) coordinates ATP. Zn(2+) contacts are provided by Cys200, Cys215, Cys218, and Cys221.

It belongs to the QueC family. The cofactor is Zn(2+).

It catalyses the reaction 7-carboxy-7-deazaguanine + NH4(+) + ATP = 7-cyano-7-deazaguanine + ADP + phosphate + H2O + H(+). It functions in the pathway purine metabolism; 7-cyano-7-deazaguanine biosynthesis. Functionally, catalyzes the ATP-dependent conversion of 7-carboxy-7-deazaguanine (CDG) to 7-cyano-7-deazaguanine (preQ(0)). The protein is 7-cyano-7-deazaguanine synthase of Lawsonia intracellularis (strain PHE/MN1-00).